Reading from the N-terminus, the 890-residue chain is Alanine--tRNA ligase (890 aa).

Zn(2+) contacts are provided by His572, His576, Cys674, and His678.

Belongs to the class-II aminoacyl-tRNA synthetase family. It depends on Zn(2+) as a cofactor.

The protein resides in the cytoplasm. The catalysed reaction is tRNA(Ala) + L-alanine + ATP = L-alanyl-tRNA(Ala) + AMP + diphosphate. Catalyzes the attachment of alanine to tRNA(Ala) in a two-step reaction: alanine is first activated by ATP to form Ala-AMP and then transferred to the acceptor end of tRNA(Ala). Also edits incorrectly charged Ser-tRNA(Ala) and Gly-tRNA(Ala) via its editing domain. This is Alanine--tRNA ligase from Prochlorococcus marinus (strain MIT 9211).